A 295-amino-acid polypeptide reads, in one-letter code: Indole-3-glycerol phosphate synthase (295 aa).

The protein belongs to the TrpC family.

The catalysed reaction is 1-(2-carboxyphenylamino)-1-deoxy-D-ribulose 5-phosphate + H(+) = (1S,2R)-1-C-(indol-3-yl)glycerol 3-phosphate + CO2 + H2O. The protein operates within amino-acid biosynthesis; L-tryptophan biosynthesis; L-tryptophan from chorismate: step 4/5. The sequence is that of Indole-3-glycerol phosphate synthase from Synechococcus sp. (strain CC9605).